Here is a 273-residue protein sequence, read N- to C-terminus: Shikimate dehydrogenase (NADP(+)) (273 aa).

Shikimate is bound by residues 15-17 (SKS) and T62. The active-site Proton acceptor is the K66. E78 serves as a coordination point for NADP(+). Residues N87 and D103 each coordinate shikimate. NADP(+)-binding positions include 127 to 131 (GAGGA), 150 to 155 (NRTQEK), and M213. Y215 provides a ligand contact to shikimate. NADP(+) is bound at residue G237.

Belongs to the shikimate dehydrogenase family. Homodimer.

It carries out the reaction shikimate + NADP(+) = 3-dehydroshikimate + NADPH + H(+). The protein operates within metabolic intermediate biosynthesis; chorismate biosynthesis; chorismate from D-erythrose 4-phosphate and phosphoenolpyruvate: step 4/7. Involved in the biosynthesis of the chorismate, which leads to the biosynthesis of aromatic amino acids. Catalyzes the reversible NADPH linked reduction of 3-dehydroshikimate (DHSA) to yield shikimate (SA). The protein is Shikimate dehydrogenase (NADP(+)) of Shewanella woodyi (strain ATCC 51908 / MS32).